The following is a 360-amino-acid chain: Peptide chain release factor 1 (360 aa).

Gln-237 is subject to N5-methylglutamine.

It belongs to the prokaryotic/mitochondrial release factor family. Methylated by PrmC. Methylation increases the termination efficiency of RF1.

The protein localises to the cytoplasm. Peptide chain release factor 1 directs the termination of translation in response to the peptide chain termination codons UAG and UAA. This chain is Peptide chain release factor 1, found in Pseudomonas fluorescens (strain ATCC BAA-477 / NRRL B-23932 / Pf-5).